The primary structure comprises 1744 residues: Transcription initiation factor TFIID subunit 1 (1744 aa).

Disordered stretches follow at residues 1 to 65 (MNNT…EKNE), 248 to 275 (VSIR…APNS), 429 to 488 (PEDR…DNDP), 1001 to 1024 (QNQT…DSDN), 1071 to 1098 (TTNQ…SQFG), and 1186 to 1213 (MKKN…PPNP). Positions 43-52 (ACSSASNGGS) are enriched in polar residues. The segment covering 55-64 (VKMEPKVEKN) has biased composition (basic and acidic residues). The segment covering 429–439 (PEDRRHDEGPD) has biased composition (basic and acidic residues). Basic residues predominate over residues 440 to 449 (HHHHHHHHRK). Positions 477–488 (ESTMAQFTDNDP) are enriched in polar residues. The segment covering 1012–1024 (STDDDSTDADSDN) has biased composition (acidic residues). 3 coiled-coil regions span residues 1019 to 1080 (DADS…KGEK), 1161 to 1204 (YAQM…TEKK), and 1282 to 1314 (NFAE…RQMA). 2 stretches are compositionally biased toward basic and acidic residues: residues 1076-1093 (EKGE…EKKS) and 1186-1205 (MKKN…EKKV). The segment covering 1319–1344 (YGGGASSSGGAGGGGSGIGGSTGGGI) has biased composition (gly residues). Residues 1319-1391 (YGGGASSSGG…SKRRSSMMPE (73 aa)) are disordered. A compositionally biased stretch (polar residues) spans 1354-1363 (SQISGTSSFL). A compositionally biased stretch (low complexity) spans 1372-1381 (GGNRNSSVSG). The Nuclear localization signal signature appears at 1379–1386 (VSGSKRRS). 2 consecutive Bromo domains span residues 1404-1512 (RARA…MIER) and 1537-1634 (YLLG…VKDQ). Over residues 1666-1694 (DHMDEMEDHPTEEEEEDDDDEIMDDDMDI) the composition is skewed to acidic residues. Disordered regions lie at residues 1666 to 1702 (DHMD…YSYD) and 1714 to 1744 (NDLA…LDSF).

Belongs to the TAF1 family. As to quaternary structure, component of the TFIID basal transcription factor complex, composed of TATA-box-binding protein tbp-1, and a number of TBP-associated factors (TAFs).

It is found in the nucleus. Its function is as follows. The TFIID basal transcription factor complex plays a major role in the initiation of RNA polymerase II (Pol II)-dependent transcription. TFIID recognizes and binds promoters via its subunit tbp-1, a TATA-box-binding protein, and promotes assembly of the pre-initiation complex (PIC). The TFIID complex consists of tbp-1 and TBP-associated factors (TAFs), including taf-1. May regulate RNA polymerase II activity and thereby may control transcription initiation by RNA polymerase II. Required for early embryonic development. Essential for embryonic transcription of several genes. This chain is Transcription initiation factor TFIID subunit 1, found in Caenorhabditis elegans.